The following is a 693-amino-acid chain: Polyribonucleotide nucleotidyltransferase (693 aa).

Positions 489 and 495 each coordinate Mg(2+). The region spanning 556 to 615 (PQIHIMNVNPAKIKDVVGRGGSVVKGIVEKTGAQIDTSDSGEVKIFAKDKRSLDLAKSMV) is the KH domain. The S1 motif domain maps to 625-693 (GQIYKGKIVK…GRVKLSLVAR (69 aa)).

Belongs to the polyribonucleotide nucleotidyltransferase family. As to quaternary structure, component of the RNA degradosome, which is a multiprotein complex involved in RNA processing and mRNA degradation. The cofactor is Mg(2+).

The protein resides in the cytoplasm. It catalyses the reaction RNA(n+1) + phosphate = RNA(n) + a ribonucleoside 5'-diphosphate. Functionally, involved in mRNA degradation. Catalyzes the phosphorolysis of single-stranded polyribonucleotides processively in the 3'- to 5'-direction. This is Polyribonucleotide nucleotidyltransferase from Francisella philomiragia subsp. philomiragia (strain ATCC 25017 / CCUG 19701 / FSC 153 / O#319-036).